A 459-amino-acid chain; its full sequence is Phosphomethylpyrimidine synthase (459 aa).

Substrate-binding positions include N80, M109, Y139, H175, 195-197 (SRG), 236-239 (DSLR), and E275. Residue H279 coordinates Zn(2+). Y302 contributes to the substrate binding site. H343 is a binding site for Zn(2+). C423, C426, and C431 together coordinate [4Fe-4S] cluster.

Belongs to the ThiC family. It depends on [4Fe-4S] cluster as a cofactor.

It carries out the reaction 5-amino-1-(5-phospho-beta-D-ribosyl)imidazole + S-adenosyl-L-methionine = 4-amino-2-methyl-5-(phosphooxymethyl)pyrimidine + CO + 5'-deoxyadenosine + formate + L-methionine + 3 H(+). Its pathway is cofactor biosynthesis; thiamine diphosphate biosynthesis. In terms of biological role, catalyzes the synthesis of the hydroxymethylpyrimidine phosphate (HMP-P) moiety of thiamine from aminoimidazole ribotide (AIR) in a radical S-adenosyl-L-methionine (SAM)-dependent reaction. This is Phosphomethylpyrimidine synthase from Synechocystis sp. (strain ATCC 27184 / PCC 6803 / Kazusa).